Here is a 565-residue protein sequence, read N- to C-terminus: Sulfite reductase [NADPH] hemoprotein beta-component (565 aa).

Residues C429, C435, C474, and C478 each coordinate [4Fe-4S] cluster. Position 478 (C478) interacts with siroheme.

The protein belongs to the nitrite and sulfite reductase 4Fe-4S domain family. As to quaternary structure, alpha(8)-beta(8). The alpha component is a flavoprotein, the beta component is a hemoprotein. Requires siroheme as cofactor. The cofactor is [4Fe-4S] cluster.

The enzyme catalyses hydrogen sulfide + 3 NADP(+) + 3 H2O = sulfite + 3 NADPH + 4 H(+). It participates in sulfur metabolism; hydrogen sulfide biosynthesis; hydrogen sulfide from sulfite (NADPH route): step 1/1. Component of the sulfite reductase complex that catalyzes the 6-electron reduction of sulfite to sulfide. This is one of several activities required for the biosynthesis of L-cysteine from sulfate. This is Sulfite reductase [NADPH] hemoprotein beta-component from Pseudoalteromonas translucida (strain TAC 125).